The sequence spans 797 residues: Kinesin-like protein Klp68D (797 aa).

Positions 19–344 (CVQVVVRCRP…LRYASRAKSI (326 aa)) constitute a Kinesin motor domain. Residue 106–113 (GQTGTGKT) coordinates ATP. The stretch at 350–384 (KNEDPQDAKLKEYQEEIERLKRLIAPQQQQRSEKQ) forms a coiled coil. 3 disordered regions span residues 371–450 (RLIA…ELER), 610–656 (SSFP…PSSL), and 722–797 (ANSS…LVNK). A compositionally biased stretch (basic residues) spans 386–396 (TIKKQRVKKPK). Residues 417-431 (QVDEDRDSDGDGAES) are compositionally biased toward acidic residues. Residues 432 to 450 (ESDKENEAEVAKSNEELER) show a composition bias toward basic and acidic residues. Residues 432–580 (ESDKENEAEV…LVKELKRQLL (149 aa)) adopt a coiled-coil conformation. The span at 626–638 (GYRRPVSHPQRRR) shows a compositional bias: basic residues. Residues 782–791 (KKPASAYPKA) are compositionally biased toward low complexity.

Belongs to the TRAFAC class myosin-kinesin ATPase superfamily. Kinesin family. Kinesin II subfamily.

It localises to the cytoplasm. The protein resides in the cytoskeleton. In terms of biological role, plus-end directed microtubule motor that may be used for anterograde axonal transport and could conceivably move cargos in fly neurons different than those moved by kinesin heavy chain or other plus-end directed motors. This chain is Kinesin-like protein Klp68D, found in Drosophila pseudoobscura pseudoobscura (Fruit fly).